Here is a 532-residue protein sequence, read N- to C-terminus: uncharacterized protein (532 aa).

Transmembrane regions (helical) follow at residues 25 to 45 (ITKI…GDVG), 65 to 85 (SGFP…NHHT), 109 to 129 (AVPI…QVAA), 134 to 154 (LFPF…MLPS), 179 to 199 (KGAS…AGSL), 203 to 223 (IILG…RQNE), 248 to 268 (LLLF…SGGE), 302 to 322 (VPYI…EKIT), 344 to 364 (KPVN…QVFS), 371 to 391 (SLAV…FPAI), 392 to 412 (AVGA…PRYG), 425 to 445 (AAVA…DKLR), 459 to 479 (SAVL…TGRG), and 494 to 514 (AVFI…LNSV).

This sequence belongs to the polysaccharide synthase family.

It is found in the cell membrane. This is an uncharacterized protein from Bacillus subtilis (strain 168).